Consider the following 72-residue polypeptide: Cytochrome b-c1 complex subunit 8-2, mitochondrial (72 aa).

Residues 1–41 (MGKQPVKLKAVVYALSPFQQKIMTGLWKDLPEKIHHKVSEN) are Mitochondrial matrix-facing. A helical transmembrane segment spans residues 42-58 (WISTILLVAPVVGTYSY). Residues 59–72 (AQYFKEQEKLEHRF) are Mitochondrial intermembrane-facing.

Belongs to the UQCRQ/QCR8 family. As to quaternary structure, component of the ubiquinol-cytochrome c oxidoreductase (cytochrome b-c1 complex, complex III, CIII), a multisubunit enzyme composed of 10 subunits. The complex is composed of 3 respiratory subunits cytochrome b (MT-CYB), cytochrome c1 (CYC1-1 or CYC1-2) and Rieske protein (UCR1-1 or UCR1-2), 2 core protein subunits MPPalpha1 (or MPPalpha2) and MPPB, and 5 low-molecular weight protein subunits QCR7-1 (or QCR7-2), UCRQ-1 (or UCRQ-2), QCR9, UCRY and probably QCR6-1 (or QCR6-2). The complex exists as an obligatory dimer and forms supercomplexes (SCs) in the inner mitochondrial membrane with NADH-ubiquinone oxidoreductase (complex I, CI), resulting in different assemblies (supercomplexes SCI(1)III(2) and SCI(2)III(4)).

Its subcellular location is the mitochondrion inner membrane. In terms of biological role, component of the ubiquinol-cytochrome c oxidoreductase, a multisubunit transmembrane complex that is part of the mitochondrial electron transport chain which drives oxidative phosphorylation. The respiratory chain contains 3 multisubunit complexes succinate dehydrogenase (complex II, CII), ubiquinol-cytochrome c oxidoreductase (cytochrome b-c1 complex, complex III, CIII) and cytochrome c oxidase (complex IV, CIV), that cooperate to transfer electrons derived from NADH and succinate to molecular oxygen, creating an electrochemical gradient over the inner membrane that drives transmembrane transport and the ATP synthase. The cytochrome b-c1 complex catalyzes electron transfer from ubiquinol to cytochrome c, linking this redox reaction to translocation of protons across the mitochondrial inner membrane, with protons being carried across the membrane as hydrogens on the quinol. In the process called Q cycle, 2 protons are consumed from the matrix, 4 protons are released into the intermembrane space and 2 electrons are passed to cytochrome c. The sequence is that of Cytochrome b-c1 complex subunit 8-2, mitochondrial (UCRQ-2) from Arabidopsis thaliana (Mouse-ear cress).